We begin with the raw amino-acid sequence, 193 residues long: Selenate reductase assembly chaperone protein (193 aa).

It belongs to the type II DMSO reductase enzyme chaperone family.

Its subcellular location is the cytoplasm. May function as a system-specific chaperone protein essential for the assembly of an active selenate reductase SerABC. The chain is Selenate reductase assembly chaperone protein from Thauera selenatis.